The sequence spans 158 residues: Deoxyuridine 5'-triphosphate nucleotidohydrolase (158 aa).

Substrate is bound by residues 75–77 (RSG), N88, 92–94 (TVD), and K102.

This sequence belongs to the dUTPase family. Mg(2+) is required as a cofactor.

It catalyses the reaction dUTP + H2O = dUMP + diphosphate + H(+). It functions in the pathway pyrimidine metabolism; dUMP biosynthesis; dUMP from dCTP (dUTP route): step 2/2. In terms of biological role, this enzyme is involved in nucleotide metabolism: it produces dUMP, the immediate precursor of thymidine nucleotides and it decreases the intracellular concentration of dUTP so that uracil cannot be incorporated into DNA. The chain is Deoxyuridine 5'-triphosphate nucleotidohydrolase from Bifidobacterium longum subsp. infantis (strain ATCC 15697 / DSM 20088 / JCM 1222 / NCTC 11817 / S12).